We begin with the raw amino-acid sequence, 93 residues long: Large ribosomal subunit protein bL36m (93 aa).

A mitochondrion-targeting transit peptide spans 1-35 (MFLQTLRLTMPRMFLHMKPSPITITRACTVPSLLS).

The protein belongs to the bacterial ribosomal protein bL36 family. In terms of assembly, component of the mitochondrial large ribosomal subunit (mt-LSU). Mature yeast 74S mitochondrial ribosomes consist of a small (37S) and a large (54S) subunit. The 37S small subunit contains a 15S ribosomal RNA (15S mt-rRNA) and 34 different proteins. The 54S large subunit contains a 21S rRNA (21S mt-rRNA) and 46 different proteins. bL36m has a zinc binding site.

The protein localises to the mitochondrion. Component of the mitochondrial ribosome (mitoribosome), a dedicated translation machinery responsible for the synthesis of mitochondrial genome-encoded proteins, including at least some of the essential transmembrane subunits of the mitochondrial respiratory chain. The mitoribosomes are attached to the mitochondrial inner membrane and translation products are cotranslationally integrated into the membrane. bL36m may be involved in a process influencing telomere capping. The chain is Large ribosomal subunit protein bL36m (RTC6) from Saccharomyces cerevisiae (strain ATCC 204508 / S288c) (Baker's yeast).